The following is a 77-amino-acid chain: MPVEKIQIRRDYVLQYMVNNDYSLNQLALEIGVSPATLSRVLNGERRPGQLVIGKMLHYFNLKFEDLFYYDFVDKSQ.

In terms of domain architecture, HTH cro/C1-type spans 13–67 (VLQYMVNNDYSLNQLALEIGVSPATLSRVLNGERRPGQLVIGKMLHYFNLKFEDL). Positions 24-43 (LNQLALEIGVSPATLSRVLN) form a DNA-binding region, H-T-H motif.

The protein localises to the cytoplasm. This is an uncharacterized protein from Bacillus subtilis (strain 168).